The sequence spans 72 residues: Large ribosomal subunit protein uL29 (72 aa).

This sequence belongs to the universal ribosomal protein uL29 family.

This is Large ribosomal subunit protein uL29 from Prochlorococcus marinus (strain MIT 9312).